We begin with the raw amino-acid sequence, 655 residues long: MGKVIGIDLGTTNSCVAVLEGGKPIIVTNREGDRTTPSIVAVGRKGDRIVGRMAKRQAVTNAENTVYSIKRFIGRRWEDTEAERSRVTYTCVPGKDDTVNVTIRDRVCTPQEISAMVLQKLRQDAETFLGEPVTQAVITVPAYFTDAQRQATKDAGAIAGLKVLRIVNEPTAAALSYGLDKLHENSRILVFDLGGGTLDVSILQLGDSVFEVKATAGNNHLGGDDFDAVIVDWLADNFLKAESIDLRQDKMAIQRLREASEQAKIDLSTLPTTTINLPFIATATVDGAPEPKHIEVELQREQFEVLASNLVQATIEPIQQALKDSNLTIDQIDRILLVGGSSRIPAIQQAVQKFFGGKTPDLTINPDEAIALGAAIQAGVLGGEVKDVLLLDVIPLSLGLETLGGVFTKIIERNTTIPTSRTQVFTTATDGQVMVEVHVLQGERALVKDNKSLGRFQLTGIPPAPRGVPQIELAFDIDADGILNVSARDRGTGRAQGIRITSTGGLTSDEIEAMRRDAELYQEADQINLQMIELRTQFENLRYSFESTLQNNRELLTAEQQEPLEASLNALASGLESVSNEAELNQLRQQLEALKQQLYAIGAAAYRQDGSVTTIPVQPTFADLIGDNDNGSNETVAIERNDDDATVTADYEAIE.

Thr197 carries the post-translational modification Phosphothreonine; by autocatalysis.

The protein belongs to the heat shock protein 70 family.

Functionally, acts as a chaperone. This Synechococcus sp. (strain ATCC 27144 / PCC 6301 / SAUG 1402/1) (Anacystis nidulans) protein is Chaperone protein DnaK 3.